The sequence spans 106 residues: UPF0091 protein RC0354 (106 aa).

It belongs to the UPF0091 family.

This is UPF0091 protein RC0354 from Rickettsia conorii (strain ATCC VR-613 / Malish 7).